Reading from the N-terminus, the 296-residue chain is MSSTQFNKGPSYGLSAEVKNRLLSKYDPQKEAELRSWIEGLTGLSIGPDFQKGLKDGIILCTLMNKLQPGSVPKINRSMQNWHQLENLSNFIKAMVSYGMNPVDLFEANDLFESGNMTQVQVSLLALAGKAKTKGLQSDVDIGVKYSEKQQRNFDDATMKAGQCVIGLQMGTNKCASQSGMTAYGTRRHLYDPKNHILPPMDHSTISLQMGTNKCASQVGMTAPGTRRHIYDTKLGTDKCDNSSMSLQMGYTQGANQSGQVFGLGRQIYDPKYCPQGPAADGAPAAAGDCPGPGES.

Serine 2 bears the N-acetylserine mark. Residues lysine 8 and lysine 25 each carry the N6-acetyllysine modification. The Calponin-homology (CH) domain occupies 28–132 (PQKEAELRSW…SLLALAGKAK (105 aa)). Serine 138 bears the Phosphoserine mark. 3 Calponin-like repeats span residues 166 to 191 (IGLQ…RHLY), 206 to 231 (ISLQ…RHIY), and 245 to 269 (MSLQ…RQIY). The disordered stretch occupies residues 275 to 296 (PQGPAADGAPAAAGDCPGPGES).

It belongs to the calponin family. In terms of tissue distribution, smooth muscle, and tissues containing significant amounts of smooth muscle.

Thin filament-associated protein that is implicated in the regulation and modulation of smooth muscle contraction. It is capable of binding to actin, calmodulin and tropomyosin. The interaction of calponin with actin inhibits the actomyosin Mg-ATPase activity. The protein is Calponin-2 (CNN2) of Sus scrofa (Pig).